Here is a 138-residue protein sequence, read N- to C-terminus: Thyrotropin subunit beta (138 aa).

The signal sequence occupies residues 1 to 20 (MTALFLMSMLFGLTCGQAMS). 6 cysteine pairs are disulfide-bonded: Cys22–Cys72, Cys36–Cys87, Cys39–Cys125, Cys47–Cys103, Cys51–Cys105, and Cys108–Cys115. A glycan (N-linked (GlcNAc...) asparagine) is linked at Asn43. Residues 133-138 (LVGFSV) constitute a propeptide that is removed on maturation.

The protein belongs to the glycoprotein hormones subunit beta family. In terms of assembly, heterodimer of a common alpha chain and a unique beta chain which confers biological specificity to thyrotropin, lutropin, follitropin and gonadotropin.

Its subcellular location is the secreted. Indispensable for the control of thyroid structure and metabolism. The polypeptide is Thyrotropin subunit beta (TSHB) (Homo sapiens (Human)).